We begin with the raw amino-acid sequence, 219 residues long: Resolvase (219 aa).

A Resolvase/invertase-type recombinase catalytic domain is found at 15 to 159; sequence VARIYLRAST…EDRRERQRQG (145 aa). The active-site O-(5'-phospho-DNA)-serine intermediate is the Ser-23.

The protein belongs to the site-specific recombinase resolvase family.

In terms of biological role, involved in plasmid partition. The chain is Resolvase (parA) from Escherichia coli.